The primary structure comprises 548 residues: Chaperonin GroEL (548 aa).

ATP-binding positions include 30–33 (TLGP), K51, 87–91 (DGTTT), G415, and D496.

This sequence belongs to the chaperonin (HSP60) family. In terms of assembly, forms a cylinder of 14 subunits composed of two heptameric rings stacked back-to-back. Interacts with the co-chaperonin GroES.

It localises to the cytoplasm. It carries out the reaction ATP + H2O + a folded polypeptide = ADP + phosphate + an unfolded polypeptide.. In terms of biological role, together with its co-chaperonin GroES, plays an essential role in assisting protein folding. The GroEL-GroES system forms a nano-cage that allows encapsulation of the non-native substrate proteins and provides a physical environment optimized to promote and accelerate protein folding. This is Chaperonin GroEL from Haemophilus influenzae (strain ATCC 51907 / DSM 11121 / KW20 / Rd).